The chain runs to 336 residues: 3-isopropylmalate dehydrogenase (336 aa).

Residues Arg-87, Arg-97, Arg-121, and Asp-211 each contribute to the substrate site. The Mg(2+) site is built by Asp-211, Asp-235, and Asp-239. 271–283 serves as a coordination point for NAD(+); the sequence is GSAPDIAGQGIAD.

The protein belongs to the isocitrate and isopropylmalate dehydrogenases family. LeuB type 2 subfamily. In terms of assembly, homodimer. Requires Mg(2+) as cofactor. Mn(2+) serves as cofactor.

The protein localises to the cytoplasm. The enzyme catalyses (2R,3S)-3-isopropylmalate + NAD(+) = 4-methyl-2-oxopentanoate + CO2 + NADH. It participates in amino-acid biosynthesis; L-leucine biosynthesis; L-leucine from 3-methyl-2-oxobutanoate: step 3/4. In terms of biological role, catalyzes the oxidation of 3-carboxy-2-hydroxy-4-methylpentanoate (3-isopropylmalate) to 3-carboxy-4-methyl-2-oxopentanoate. The product decarboxylates to 4-methyl-2 oxopentanoate. This Mycolicibacterium vanbaalenii (strain DSM 7251 / JCM 13017 / BCRC 16820 / KCTC 9966 / NRRL B-24157 / PYR-1) (Mycobacterium vanbaalenii) protein is 3-isopropylmalate dehydrogenase.